The sequence spans 104 residues: Large ribosomal subunit protein uL24 (104 aa).

This sequence belongs to the universal ribosomal protein uL24 family. Part of the 50S ribosomal subunit.

Functionally, one of two assembly initiator proteins, it binds directly to the 5'-end of the 23S rRNA, where it nucleates assembly of the 50S subunit. One of the proteins that surrounds the polypeptide exit tunnel on the outside of the subunit. This is Large ribosomal subunit protein uL24 from Corynebacterium jeikeium (strain K411).